The primary structure comprises 235 residues: Sugar fermentation stimulation protein homolog (235 aa).

The protein belongs to the SfsA family.

In Maricaulis maris (strain MCS10) (Caulobacter maris), this protein is Sugar fermentation stimulation protein homolog.